The primary structure comprises 138 residues: Cysteine desulfuration protein SufE (138 aa).

The active-site Cysteine persulfide intermediate is the cysteine 51.

Belongs to the SufE family. In terms of assembly, homodimer. Interacts with SufS.

Its subcellular location is the cytoplasm. The protein operates within cofactor biosynthesis; iron-sulfur cluster biosynthesis. Participates in cysteine desulfuration mediated by SufS. Cysteine desulfuration mobilizes sulfur from L-cysteine to yield L-alanine and constitutes an essential step in sulfur metabolism for biosynthesis of a variety of sulfur-containing biomolecules. Functions as a sulfur acceptor for SufS, by mediating the direct transfer of the sulfur atom from the S-sulfanylcysteine of SufS, an intermediate product of cysteine desulfuration process. In Escherichia coli O81 (strain ED1a), this protein is Cysteine desulfuration protein SufE.